A 129-amino-acid polypeptide reads, in one-letter code: Follitropin subunit beta (129 aa).

Residues Met-1–Cys-18 form the signal peptide. 6 disulfides stabilise this stretch: Cys-21–Cys-69, Cys-35–Cys-84, Cys-38–Cys-122, Cys-46–Cys-100, Cys-50–Cys-102, and Cys-105–Cys-112. 2 N-linked (GlcNAc...) asparagine glycosylation sites follow: Asn-25 and Asn-42.

It belongs to the glycoprotein hormones subunit beta family. As to quaternary structure, heterodimer. The active follitropin is a heterodimer composed of an alpha chain/CGA shared with other hormones and a unique beta chain/FSHB shown here.

Its subcellular location is the secreted. Together with the alpha chain CGA constitutes follitropin, the follicle-stimulating hormone, and provides its biological specificity to the hormone heterodimer. Binds FSHR, a G protein-coupled receptor, on target cells to activate downstream signaling pathways. Follitropin is involved in follicle development and spermatogenesis in reproductive organs. The polypeptide is Follitropin subunit beta (FSHB) (Macaca fascicularis (Crab-eating macaque)).